Consider the following 202-residue polypeptide: MILNREFYKRDALEVAKGLLGKILVREIDGVILRGKIVETEAYIGSIDKASHAYNGRRTERTEPLFKEGGIAYVYFIYGLYHCFNVISGENDDGQGVLIRALEPLDNFDYISLKRFNKKFEELSTVKKRDLTNGPSKLCMAFEIDKKDNYKVLYEKGDLYIEDSCDNYDITQTTRIGIDYAEEAIDFPWRFYIKDNKYISKK.

This sequence belongs to the DNA glycosylase MPG family.

This is Putative 3-methyladenine DNA glycosylase from Clostridium botulinum (strain Alaska E43 / Type E3).